The following is a 172-amino-acid chain: Low molecular mass early light-inducible protein HV90, chloroplastic (172 aa).

Residues 1–38 constitute a chloroplast transit peptide; sequence MATMMSMSSFAGAAVVPRSSASSFGARSLPALGRRALV. The next 2 helical transmembrane spans lie at 106–126 and 150–170; these read GQAWFAYTVAVLSMASLVPLL and FAMLGLVALAATEIITGAPFI.

Belongs to the ELIP/psbS family.

Its subcellular location is the plastid. The protein localises to the chloroplast membrane. Probably involved in the integration of pigments into the mature pigment-protein complexes. This is Low molecular mass early light-inducible protein HV90, chloroplastic from Hordeum vulgare (Barley).